The chain runs to 592 residues: Keratin, type II cytoskeletal 5 (592 aa).

The span at 1-18 shows a compositional bias: low complexity; sequence MSRQSSVSFRSGGSRSFS. The segment at 1 to 20 is disordered; sequence MSRQSSVSFRSGGSRSFSTA. A head region spans residues 1 to 169; sequence MSRQSSVSFR…DPSIQRVRTE (169 aa). 4 positions are modified to phosphoserine: S5, S8, S16, and S21. Residue T24 is modified to Phosphothreonine; by CDK1. A phosphoserine mark is found at S26, S36, S50, S64, S71, S75, and S82. A Phosphothreonine; by CDK1 modification is found at T153. T168 is modified (phosphothreonine; by AURKB). The segment at 170-205 is coil 1A; the sequence is EREQIKTLNNKFASFIDKVRFLEQQNKVLDTKWTLL. An IF rod domain is found at 170–483; sequence EREQIKTLNN…KLLEGEECRL (314 aa). The tract at residues 206-224 is linker 1; it reads QEQGTKTVRQNLEPLFEQY. Residues 225–317 form a coil 1B region; the sequence is INNLRRQLDS…FFDAELSQMQ (93 aa). Residues 318–340 form a linker 12 region; it reads THVSDTSVVLSMDNNRNLDLDSI. A coil 2 region spans residues 341 to 479; the sequence is IAEVKAQYEE…ATYRKLLEGE (139 aa). Residues 480 to 592 are tail; sequence ECRLSGEGVG…TSSSRKSFKS (113 aa). Residues 568–592 are disordered; that stretch reads GSGGGSSSSVKFVSTTSSSRKSFKS. The segment covering 574–592 has biased composition (low complexity); sequence SSSVKFVSTTSSSRKSFKS.

Belongs to the intermediate filament family. Heterodimer of a type I and a type II keratin. Heterodimer with type I keratin KRT25 leading to the formation of keratin intermediate filament (KIF) network. Forms a heterodimer (via 2B domains) with KRT14 (via 2B domains). Interacts with TCHP. Interacts with EPPK1. Interacts with AMELX. Interacts with PKP1 (via N-terminus) and PKP2. Phosphorylated by CDK1, AURKB and Rho-kinase, phosphorylation is regulated by the cell cycle. Thr-24 phosphorylation, mediated by CDK1, peaks during prometaphase or metaphase cells with phosphorylated filamentous structures evident throughout the cytoplasm during early mitosis. CDK1 phosphorylates Thr-24 in mitotic cells at the site of injury. Post-translationally, O-glycosylated.

It is found in the cytoplasm. Required for the formation of keratin intermediate filaments in the basal epidermis and maintenance of the skin barrier in response to mechanical stress. Regulates the recruitment of Langerhans cells to the epidermis, potentially by modulation of the abundance of macrophage chemotactic cytokines, macrophage inflammatory cytokines and CTNND1 localization in keratinocytes. This chain is Keratin, type II cytoskeletal 5 (KRT5), found in Pan troglodytes (Chimpanzee).